Reading from the N-terminus, the 78-residue chain is Large ribosomal subunit protein bL28 (78 aa).

A disordered region spans residues 1–22 (MAKVCQVTGKRPVTGHNVSHAK).

This sequence belongs to the bacterial ribosomal protein bL28 family.

The sequence is that of Large ribosomal subunit protein bL28 from Teredinibacter turnerae (strain ATCC 39867 / T7901).